The sequence spans 371 residues: 4-hydroxy-3-methylbut-2-en-1-yl diphosphate synthase (flavodoxin) (371 aa).

Residues cysteine 270, cysteine 273, cysteine 305, and glutamate 312 each contribute to the [4Fe-4S] cluster site.

Belongs to the IspG family. It depends on [4Fe-4S] cluster as a cofactor.

It catalyses the reaction (2E)-4-hydroxy-3-methylbut-2-enyl diphosphate + oxidized [flavodoxin] + H2O + 2 H(+) = 2-C-methyl-D-erythritol 2,4-cyclic diphosphate + reduced [flavodoxin]. It participates in isoprenoid biosynthesis; isopentenyl diphosphate biosynthesis via DXP pathway; isopentenyl diphosphate from 1-deoxy-D-xylulose 5-phosphate: step 5/6. Converts 2C-methyl-D-erythritol 2,4-cyclodiphosphate (ME-2,4cPP) into 1-hydroxy-2-methyl-2-(E)-butenyl 4-diphosphate. The chain is 4-hydroxy-3-methylbut-2-en-1-yl diphosphate synthase (flavodoxin) from Psychrobacter arcticus (strain DSM 17307 / VKM B-2377 / 273-4).